Consider the following 118-residue polypeptide: Small ribosomal subunit protein uS13 (118 aa).

Residues 94–118 (GLPLRGQRTKTNARTRKGPRKPIRK) are disordered.

It belongs to the universal ribosomal protein uS13 family. As to quaternary structure, part of the 30S ribosomal subunit. Forms a loose heterodimer with protein S19. Forms two bridges to the 50S subunit in the 70S ribosome.

Its function is as follows. Located at the top of the head of the 30S subunit, it contacts several helices of the 16S rRNA. In the 70S ribosome it contacts the 23S rRNA (bridge B1a) and protein L5 of the 50S subunit (bridge B1b), connecting the 2 subunits; these bridges are implicated in subunit movement. Contacts the tRNAs in the A and P-sites. The sequence is that of Small ribosomal subunit protein uS13 from Chromohalobacter salexigens (strain ATCC BAA-138 / DSM 3043 / CIP 106854 / NCIMB 13768 / 1H11).